The chain runs to 628 residues: DNA-directed RNA polymerase III subunit RPC3 (628 aa).

Over residues 360–383 the composition is skewed to acidic residues; sequence EVDGEASADEDEGEDESSEESDYD. A disordered region spans residues 360–422; it reads EVDGEASADE…SAAPKERRMD (63 aa). The span at 390-406 shows a compositional bias: low complexity; that stretch reads TTHGTNGVNGTNGTNGT. Positions 408–422 are enriched in basic and acidic residues; sequence VKFDESAAPKERRMD. The tract at residues 555–576 is leucine-zipper; the sequence is GYVTMVHCLQVLEALRRKERDV.

The protein belongs to the RNA polymerase beta chain family. In terms of assembly, component of the RNA polymerase III (Pol III) complex consisting of 17 subunits.

The protein localises to the nucleus. Functionally, DNA-dependent RNA polymerase catalyzes the transcription of DNA into RNA using the four ribonucleoside triphosphates as substrates. Specific core component of RNA polymerase III which synthesizes small RNAs, such as 5S rRNA and tRNAs. The protein is DNA-directed RNA polymerase III subunit RPC3 (RPC82) of Chaetomium globosum (strain ATCC 6205 / CBS 148.51 / DSM 1962 / NBRC 6347 / NRRL 1970) (Soil fungus).